The chain runs to 161 residues: MTVLEIDLLDETKKLPDEDKQLVENILQFAAEYLKIEQGTELSLTFTTNEGIREINREYRDKDQATDVISFALEEMGDGETEIDWGEFDLETPRMLGDIIISTEKAEEQAKDYGHTKARELGFLAVHGLLHLLGYDHMEPDEEKVMFGLQKEVLDAYGLER.

Zn(2+)-binding residues include His127, His131, and His137.

It belongs to the endoribonuclease YbeY family. Zn(2+) serves as cofactor.

It localises to the cytoplasm. In terms of biological role, single strand-specific metallo-endoribonuclease involved in late-stage 70S ribosome quality control and in maturation of the 3' terminus of the 16S rRNA. The polypeptide is Endoribonuclease YbeY (Listeria monocytogenes serotype 4a (strain HCC23)).